Reading from the N-terminus, the 193-residue chain is DNA damage-inducible transcript 4-like protein (193 aa).

This sequence belongs to the DDIT4 family. In terms of tissue distribution, expressed in heart, skeletal muscle and testis.

The protein resides in the cytoplasm. Its function is as follows. Inhibits cell growth by regulating the TOR signaling pathway upstream of the TSC1-TSC2 complex and downstream of AKT1. This chain is DNA damage-inducible transcript 4-like protein (Ddit4l), found in Rattus norvegicus (Rat).